The primary structure comprises 278 residues: Protoheme IX farnesyltransferase 1 (278 aa).

Transmembrane regions (helical) follow at residues 12–32 (VIWLLILASVAGYIYGGGGVD), 35–55 (LFSLLAVAFLSTGGSAAFNHY), 76–96 (LITPNAALAYSLALSATGISL), 98–118 (FLLLGLLPGLFVLLGWLFYAV), 129–149 (WLNIFGGGFAGNAVFLGGYAL), 158–178 (AVLISFAIYLWIPSHIWALAF), 199–221 (ERAVAVISAINAAAAAYILWLYL), 226–248 (GAGGALVALGVAATIATSIYAAV), and 255–275 (MWKMYKASSPILALFLIALIL).

It belongs to the UbiA prenyltransferase family. Protoheme IX farnesyltransferase subfamily.

Its subcellular location is the cell membrane. It catalyses the reaction heme b + (2E,6E)-farnesyl diphosphate + H2O = Fe(II)-heme o + diphosphate. Its pathway is porphyrin-containing compound metabolism; heme O biosynthesis; heme O from protoheme: step 1/1. Functionally, converts heme B (protoheme IX) to heme O by substitution of the vinyl group on carbon 2 of heme B porphyrin ring with a hydroxyethyl farnesyl side group. This chain is Protoheme IX farnesyltransferase 1, found in Pyrobaculum aerophilum (strain ATCC 51768 / DSM 7523 / JCM 9630 / CIP 104966 / NBRC 100827 / IM2).